The following is a 324-amino-acid chain: Polyketide biosynthesis acyltransferase homolog PksD (324 aa).

The active site involves S99.

The protein resides in the cytoplasm. Its pathway is antibiotic biosynthesis; bacillaene biosynthesis. In terms of biological role, probably involved in some intermediate steps for the synthesis of the antibiotic polyketide bacillaene which is involved in secondary metabolism. The protein is Polyketide biosynthesis acyltransferase homolog PksD (pksD) of Bacillus subtilis (strain 168).